We begin with the raw amino-acid sequence, 142 residues long: Small ribosomal subunit protein uS11 (142 aa).

Residues 1–21 (MPPKTRGAVRKPRRKDKKNIA) are disordered. Residues 7–17 (GAVRKPRRKDK) are compositionally biased toward basic residues.

It belongs to the universal ribosomal protein uS11 family. Part of the 30S ribosomal subunit. Interacts with proteins S7 and S18. Binds to IF-3.

In terms of biological role, located on the platform of the 30S subunit, it bridges several disparate RNA helices of the 16S rRNA. Forms part of the Shine-Dalgarno cleft in the 70S ribosome. This is Small ribosomal subunit protein uS11 from Paenarthrobacter aurescens (strain TC1).